The sequence spans 477 residues: Stromelysin-3 (477 aa).

The N-terminal stretch at 1 to 17 (MHLLILLPALCVLGAHS) is a signal peptide. Positions 18–85 (APLSYTYLQH…SSSGRNRQKR (68 aa)) are cleaved as a propeptide — activation peptide. The disordered stretch occupies residues 64 to 83 (RCGVPDIPAPPDSSSGRNRQ). Zn(2+)-binding residues include cysteine 65, histidine 152, and aspartate 154. 4 residues coordinate Ca(2+): aspartate 159, glycine 160, glycine 162, and isoleucine 164. Residues histidine 167, histidine 180, and histidine 203 each coordinate Zn(2+). Glutamate 204 is a catalytic residue. Positions 207 and 213 each coordinate Zn(2+). Cysteine 279 and cysteine 466 form a disulfide bridge. Hemopexin repeat units follow at residues 280 to 324 (KTNF…WRGI), 325 to 369 (PDTV…GISV), 370 to 418 (TQIQ…WRGV), and 419 to 466 (PKGI…FFNC).

It belongs to the peptidase M10A family. Requires Ca(2+) as cofactor. The cofactor is Zn(2+). Expressed in fibroblast cells that are activated by thyroid hormone. High levels in resorbing tail.

The protein resides in the secreted. It is found in the extracellular space. It localises to the extracellular matrix. Functionally, may be involved in the modification of the extracellular matrix during metamorphic apoptosis. This is Stromelysin-3 (mmp11) from Xenopus laevis (African clawed frog).